A 203-amino-acid polypeptide reads, in one-letter code: uncharacterized protein (203 aa).

This is an uncharacterized protein from Pasteurella multocida (strain Pm70).